A 401-amino-acid chain; its full sequence is Argininosuccinate synthase (401 aa).

Position 9–17 (9–17 (AYSGGLDTS)) interacts with ATP. Residue Tyr-86 coordinates L-citrulline. Residue Gly-116 coordinates ATP. L-aspartate-binding residues include Thr-118, Asn-122, and Asp-123. Asn-122 is a binding site for L-citrulline. Residues Arg-126, Ser-174, Ser-183, Glu-259, and Tyr-271 each coordinate L-citrulline.

It belongs to the argininosuccinate synthase family. Type 1 subfamily. As to quaternary structure, homotetramer.

It localises to the cytoplasm. The enzyme catalyses L-citrulline + L-aspartate + ATP = 2-(N(omega)-L-arginino)succinate + AMP + diphosphate + H(+). The protein operates within amino-acid biosynthesis; L-arginine biosynthesis; L-arginine from L-ornithine and carbamoyl phosphate: step 2/3. The polypeptide is Argininosuccinate synthase (Bacillus anthracis (strain A0248)).